We begin with the raw amino-acid sequence, 82 residues long: RNA-binding protein Hfq (82 aa).

One can recognise a Sm domain in the interval 10 to 70; it reads DAFLNQVRKD…ISTVAPLRPI (61 aa).

This sequence belongs to the Hfq family. As to quaternary structure, homohexamer.

In terms of biological role, RNA chaperone that binds small regulatory RNA (sRNAs) and mRNAs to facilitate mRNA translational regulation in response to envelope stress, environmental stress and changes in metabolite concentrations. Also binds with high specificity to tRNAs. This is RNA-binding protein Hfq from Syntrophomonas wolfei subsp. wolfei (strain DSM 2245B / Goettingen).